The following is a 403-amino-acid chain: Chaperone protein DnaJ (403 aa).

In terms of domain architecture, J spans 4-69; the sequence is DYYEILGVAR…DKRRRYDQFG (66 aa). Residues 159-240 form a CR-type zinc finger; that stretch reads GVEKTIKIKK…CYGEGIKQGE (82 aa). Positions 172, 175, 188, 191, 214, 217, 228, and 231 each coordinate Zn(2+). 4 CXXCXGXG motif repeats span residues 172-179, 188-195, 214-221, and 228-235; these read CRECNGTG, CPTCHGSG, CPTCGGEG, and CPSCYGEG.

The protein belongs to the DnaJ family. As to quaternary structure, homodimer. Requires Zn(2+) as cofactor.

The protein resides in the cytoplasm. Functionally, participates actively in the response to hyperosmotic and heat shock by preventing the aggregation of stress-denatured proteins and by disaggregating proteins, also in an autonomous, DnaK-independent fashion. Unfolded proteins bind initially to DnaJ; upon interaction with the DnaJ-bound protein, DnaK hydrolyzes its bound ATP, resulting in the formation of a stable complex. GrpE releases ADP from DnaK; ATP binding to DnaK triggers the release of the substrate protein, thus completing the reaction cycle. Several rounds of ATP-dependent interactions between DnaJ, DnaK and GrpE are required for fully efficient folding. Also involved, together with DnaK and GrpE, in the DNA replication of plasmids through activation of initiation proteins. The chain is Chaperone protein DnaJ from Chlorobaculum tepidum (strain ATCC 49652 / DSM 12025 / NBRC 103806 / TLS) (Chlorobium tepidum).